The chain runs to 353 residues: uncharacterized protein (353 aa).

An N-terminal signal peptide occupies residues 1–20 (MLMRSVCFILLAVLLFSLSA). The N-palmitoyl cysteine moiety is linked to residue Cys21. Cys21 carries the S-diacylglycerol cysteine lipid modification.

It localises to the cell membrane. This is an uncharacterized protein from Bacillus subtilis (strain 168).